Reading from the N-terminus, the 462-residue chain is Microspherule protein 1 (462 aa).

At Met1 the chain carries N-acetylmethionine. The interval 1–130 (MDKDSQGLLD…KSKQPLQVTK (130 aa)) is disordered. Ser22 is modified (phosphoserine). The span at 43 to 55 (PKRRSSSRFIKRK) shows a compositional bias: basic residues. At Ser102 the chain carries Phosphoserine. Thr103 carries the post-translational modification Phosphothreonine. Residues 103 to 112 (TPVPPSPAPA) show a composition bias toward pro residues. Ser108 carries the post-translational modification Phosphoserine. The short motif at 113-123 (PGLTKRVKKSK) is the Nuclear localization signal element. An N6-acetyllysine mark is found at Lys123 and Lys130. A Phosphoserine modification is found at Ser282. The stretch at 301 to 335 (LEHELMVADRRQKREIRQLEQELHKWQVLVDSITG) forms a coiled coil. The FHA domain maps to 363–419 (ITLGRATKDNQIDVDLSLEGPAWKISRKQGVIKLKNNGDFFIANEGRRPIYIDGRPV). The UBR5-degron motif lies at 389–396 (RKQGVIKL).

As to quaternary structure, component of the chromatin remodeling INO80 complex; specifically part of a complex module associated with the N-terminus of INO80. Component of some MLL1/MLL complex, at least composed of the core components KMT2A/MLL1, ASH2L, HCFC1, WDR5 and RBBP5, as well as the facultative components BACC1, CHD8, E2F6, HSP70, INO80C, KANSL1, LAS1L, MAX, MCRS1, MGA, KAT8/MOF, PELP1, PHF20, PRP31, RING2, RUVB1/TIP49A, RUVB2/TIP49B, SENP3, TAF1, TAF4, TAF6, TAF7, TAF9 and TEX10. Component of the NSL complex at least composed of MOF/KAT8, KANSL1, KANSL2, KANSL3, MCRS1, PHF20, OGT1/OGT, WDR5 and HCFC1. Interacts with NOP2. Interacts with PINX1. Interacts with TERT. Interacts with CCDC85B. Interacts with DAXX. Interacts (via N-terminus) with FMR1 (via phosphorylated form). Interacts with FXR1 and FXR2. Interacts (via C-terminus) with NDE1 (via C-terminus); phosphorylation of NDE1 inhibits the interaction. Interacts (via C-terminus) with ZNF375. Interacts (via C-terminus) with active GTP-bound RHEB (via N-terminus) under conditions of high amino acid concentration; the interaction promotes mTORC1 complex activation by RHEB. Interacts (via N-terminus) with the mTORC1 complex; the interaction ensures mTORC1 activation by RHEB. Interacts with DYNC1I1; the interaction is required for the proper distribution of centriolar satellites. Interacts with TTBK2; the interaction is required for recruitment of TTBK2 to the mother centriole. Interacts with KIF2A; the interaction occurs during mitosis and facilitates chromosome alignment. (Microbial infection) Interacts with Herpes simplex virus ICP22. In terms of processing, ubiquitinated by UBR5 when not assembled in the INO80 complex, leading to its degradation: UBR5 recognizes and binds a degron that is not accessible when MCRS1 is part of the INO80 complex. Post-translationally, phosphorylated by AURKA on Ser-35 and/or Ser-36 during mitosis which is required for kinetochore fiber assembly and mitotic progression but not for spindle localization or for chromosome-induced microtuble aster formation. Also phosphorylated by AURKA on Ser-85 and/or Ser-87. Phosphorylated by TTK/MPS1 which enhances recruitment of KIF2A to the minus end of spindle microtubules and facilitates precise chromosome segregation. In terms of tissue distribution, detected in testis, and at lower levels in spleen, thymus, prostate, uterus, small intestine, colon and leukocytes.

Its subcellular location is the nucleus. It is found in the nucleolus. The protein localises to the cytoplasm. The protein resides in the cytoskeleton. It localises to the microtubule organizing center. Its subcellular location is the centrosome. It is found in the spindle pole. The protein localises to the chromosome. The protein resides in the centromere. It localises to the kinetochore. Its subcellular location is the lysosome. It is found in the centriolar satellite. Its function is as follows. Modulates the transcription repressor activity of DAXX by recruiting it to the nucleolus. As part of the NSL complex, may be involved in acetylation of nucleosomal histone H4 on several lysine residues. Putative regulatory component of the chromatin remodeling INO80 complex which is involved in transcriptional regulation, DNA replication and probably DNA repair. May also be an inhibitor of TERT telomerase activity. Binds to G-quadruplex structures in mRNA. Binds to RNA homomer poly(G) and poly(U). Maintains RHEB at the lysosome in its active GTP-bound form and prevents its interaction with the mTORC1 complex inhibitor TSC2, ensuring activation of the mTORC1 complex by RHEB. Stabilizes the minus ends of kinetochore fibers by protecting them from depolymerization, ensuring functional spindle assembly during mitosis. Following phosphorylation by TTK/MPS1, enhances recruitment of KIF2A to the minus ends of mitotic spindle microtubules which promotes chromosome alignment. Regulates the morphology of microtubule minus ends in mitotic spindle by maintaining them in a closed conformation characterized by the presence of an electron-dense cap. Regulates G2/M transition and spindle assembly during oocyte meiosis. Mediates histone modifications and transcriptional regulation in germinal vesicle oocytes which are required for meiotic progression. Also regulates microtubule nucleation and spindle assembly by activating aurora kinases during oocyte meiosis. Contributes to the establishment of centriolar satellites and also plays a role in primary cilium formation by recruiting TTBK2 to the mother centriole which is necessary for removal of the CP110 cap from the mother centriole, an early step in ciliogenesis. Required for epiblast development during early embryogenesis. Essential for cell viability. This Homo sapiens (Human) protein is Microspherule protein 1 (MCRS1).